The chain runs to 480 residues: MDKFQSKFTRFGFISICFGSIALVLLISHCSTSFFDYSFQKFKFSFPEETELRRNVYTSSSGEENRVVVDSRHVSQQILTVRSTNSTLQSKPEKLNRRNLVEQGLAKARASILEASSNVNTTLFKSDLPNSEIYRNPSALYRSYLEMEKRFKVYVYEEGEPPLVHDGPCKSVYAVEGRFITEMEKRRTKFRTYDPNQAYVYFLPFSVTWLVRYLYEGNSDAKPLKTFVSDYIRLVSTNHPFWNRTNGADHFMLTCHDWGPLTSQANRDLFNTSIRVMCNANSSEGFNPTKDVTLPEIKLYGGEVDHKLRLSKTLSASPRPYLGFFAGGVHGPVRPILLKHWKQRDLDMPVYEYLPKHLNYYDFMRSSKFCFCPSGYEVASPRVIEAIYSECIPVILSVNFVLPFTDVLRWETFSVLVDVSEIPRLKEILMSISNEKYEWLKSNLRYVRRHFELNDPPQRFDAFHLTLHSIWLRRLNLKLT.

Residues M1–R10 are Cytoplasmic-facing. Residues F11 to S31 traverse the membrane as a helical; Signal-anchor for type II membrane protein segment. The Lumenal segment spans residues T32–T480. 5 N-linked (GlcNAc...) asparagine glycosylation sites follow: N85, N120, N243, N271, and N281.

It belongs to the glycosyltransferase 47 family.

It localises to the golgi apparatus membrane. May be involved in cell wall biosynthesis. The sequence is that of Probable glycosyltransferase At5g25310 from Arabidopsis thaliana (Mouse-ear cress).